Here is a 781-residue protein sequence, read N- to C-terminus: Death domain-containing protein 1 (781 aa).

ZU5 domains lie at 167–301 (IMEK…VSCL) and 302–483 (KKES…VLHL). One can recognise a Death domain in the interval 679-764 (DNLLHWLAEE…DLAEELKFKW (86 aa)).

The protein is Death domain-containing protein 1 (DTHD1) of Homo sapiens (Human).